The following is an 83-amino-acid chain: Putative regulatory protein FMG_0656 (83 aa).

It belongs to the RemA family.

The chain is Putative regulatory protein FMG_0656 from Finegoldia magna (strain ATCC 29328 / DSM 20472 / WAL 2508) (Peptostreptococcus magnus).